A 432-amino-acid polypeptide reads, in one-letter code: Adenylosuccinate synthetase (432 aa).

GTP-binding positions include 13 to 19 and 41 to 43; these read GDEGKGK and GHT. Residue Asp14 is the Proton acceptor of the active site. 2 residues coordinate Mg(2+): Asp14 and Gly41. IMP is bound by residues 14 to 17, 39 to 42, Thr130, Arg144, Gln225, Thr240, and Arg304; these read DEGK and NAGH. His42 functions as the Proton donor in the catalytic mechanism. Substrate is bound at residue 300–306; it reads AVTGRPR. GTP contacts are provided by residues Arg306, 332 to 334, and 415 to 417; these read KLD and STG.

This sequence belongs to the adenylosuccinate synthetase family. Homodimer. Mg(2+) is required as a cofactor.

The protein localises to the cytoplasm. The catalysed reaction is IMP + L-aspartate + GTP = N(6)-(1,2-dicarboxyethyl)-AMP + GDP + phosphate + 2 H(+). It participates in purine metabolism; AMP biosynthesis via de novo pathway; AMP from IMP: step 1/2. Plays an important role in the de novo pathway of purine nucleotide biosynthesis. Catalyzes the first committed step in the biosynthesis of AMP from IMP. This is Adenylosuccinate synthetase from Actinobacillus pleuropneumoniae serotype 3 (strain JL03).